The following is a 212-amino-acid chain: MKMMSTRALALGAAAVLAFAAATAQAQRCGEQGSNMECPNNLCCSQYGYCGMGGDYCGKGCQNGACWTSKRCGSQAGGATCTNNQCCSQYGYCGFGAEYCGAGCQGGPCRADIKCGSQAGGKLCPNNLCCSQWGFCGLGSEFCGGGCQSGACSTDKPCGKDAGGRVCTNNYCCSKWGSCGIGPGYCGAGCQSGGCDGVFAEAITANSTLLQE.

The N-terminal stretch at 1–26 (MKMMSTRALALGAAAVLAFAAATAQA) is a signal peptide. Gln27 bears the Pyrrolidone carboxylic acid mark. Chitin-binding type-1 domains are found at residues 27–68 (QRCG…ACWT), 69–111 (SKRC…PCRA), 112–154 (DIKC…ACST), and 155–197 (DKPC…GCDG). Cystine bridges form between Cys29–Cys44, Cys38–Cys50, Cys43–Cys57, Cys61–Cys66, Cys72–Cys87, Cys81–Cys93, Cys86–Cys100, Cys104–Cys109, Cys115–Cys130, Cys124–Cys136, Cys129–Cys143, Cys147–Cys152, Cys158–Cys173, Cys167–Cys179, Cys172–Cys186, and Cys190–Cys195. 36-38 (MEC) contributes to the substrate binding site. 88–99 (SQYGYCGFGAEY) lines the substrate pocket. Substrate is bound at residue 140–141 (SE). Positions 198-212 (VFAEAITANSTLLQE) are excised as a propeptide.

As to quaternary structure, homodimer, u-shaped.

In terms of biological role, N-acetyl-D-glucosamine / N-acetyl-D-neuraminic acid binding lectin. The sequence is that of Agglutinin isolectin 1 from Triticum aestivum (Wheat).